We begin with the raw amino-acid sequence, 306 residues long: Methionyl-tRNA formyltransferase (306 aa).

Position 110 to 113 (110 to 113 (SLLP)) interacts with (6S)-5,6,7,8-tetrahydrofolate.

Belongs to the Fmt family.

The enzyme catalyses L-methionyl-tRNA(fMet) + (6R)-10-formyltetrahydrofolate = N-formyl-L-methionyl-tRNA(fMet) + (6S)-5,6,7,8-tetrahydrofolate + H(+). In terms of biological role, attaches a formyl group to the free amino group of methionyl-tRNA(fMet). The formyl group appears to play a dual role in the initiator identity of N-formylmethionyl-tRNA by promoting its recognition by IF2 and preventing the misappropriation of this tRNA by the elongation apparatus. This is Methionyl-tRNA formyltransferase from Brucella melitensis biotype 2 (strain ATCC 23457).